The following is a 417-amino-acid chain: Serine hydroxymethyltransferase (417 aa).

Residues Leu121 and 125–127 each bind (6S)-5,6,7,8-tetrahydrofolate; that span reads GHL. The residue at position 229 (Lys229) is an N6-(pyridoxal phosphate)lysine. 355 to 357 lines the (6S)-5,6,7,8-tetrahydrofolate pocket; sequence SPF.

This sequence belongs to the SHMT family. In terms of assembly, homodimer. Pyridoxal 5'-phosphate is required as a cofactor.

Its subcellular location is the cytoplasm. The enzyme catalyses (6R)-5,10-methylene-5,6,7,8-tetrahydrofolate + glycine + H2O = (6S)-5,6,7,8-tetrahydrofolate + L-serine. It functions in the pathway one-carbon metabolism; tetrahydrofolate interconversion. The protein operates within amino-acid biosynthesis; glycine biosynthesis; glycine from L-serine: step 1/1. Functionally, catalyzes the reversible interconversion of serine and glycine with tetrahydrofolate (THF) serving as the one-carbon carrier. This reaction serves as the major source of one-carbon groups required for the biosynthesis of purines, thymidylate, methionine, and other important biomolecules. Also exhibits THF-independent aldolase activity toward beta-hydroxyamino acids, producing glycine and aldehydes, via a retro-aldol mechanism. This Xylella fastidiosa (strain 9a5c) protein is Serine hydroxymethyltransferase.